The chain runs to 303 residues: MPVLEVKIGNLSFKNPVLTASGTFGYGLEYSQFVDLNILGGIVVKGLSLKPKQGNPPPRIYETPCGMINSIGLQNIGLEAFKKEKLPFLKKFNTNIIVNFFGENLDEYIEVAKLLDETEGVHALEMNVSCPNKTSEWRKMGLEPELLREAIKRVRLHIKKPLIVKLAPQVTEIALMARICEEEGADAVSLINTIPAMVIDIKTRKSMIGTLTGGLSGPAIRPVALRAVWEVAQAVKIPVIGVGGIVSAEDALQFLIAGAKAIQVGTANFINPIATVEIIEGIKQFLIEENIKDINEIIGSFKE.

Residues S21 and 45-46 (KG) contribute to the FMN site. Residues K45 and 69–73 (NSIGL) contribute to the substrate site. The FMN site is built by N99 and N127. A substrate-binding site is contributed by N127. C130 functions as the Nucleophile in the catalytic mechanism. The FMN site is built by K165 and I191. 192 to 193 (NT) provides a ligand contact to substrate. FMN-binding positions include G217, 243-244 (GG), and 265-266 (GT).

Belongs to the dihydroorotate dehydrogenase family. Type 1 subfamily. As to quaternary structure, heterotetramer of 2 PyrK and 2 PyrD type B subunits. It depends on FMN as a cofactor.

Its subcellular location is the cytoplasm. The enzyme catalyses (S)-dihydroorotate + NAD(+) = orotate + NADH + H(+). It participates in pyrimidine metabolism; UMP biosynthesis via de novo pathway; orotate from (S)-dihydroorotate (NAD(+) route): step 1/1. Functionally, catalyzes the conversion of dihydroorotate to orotate with NAD(+) as electron acceptor. This chain is Dihydroorotate dehydrogenase B (NAD(+)), catalytic subunit (pyrD), found in Thermodesulfovibrio yellowstonii (strain ATCC 51303 / DSM 11347 / YP87).